The sequence spans 241 residues: Probable porphobilinogen deaminase (241 aa).

The protein belongs to the HMBS family.

It carries out the reaction 4 porphobilinogen + H2O = hydroxymethylbilane + 4 NH4(+). It participates in porphyrin-containing compound metabolism; protoporphyrin-IX biosynthesis; coproporphyrinogen-III from 5-aminolevulinate: step 2/4. Its function is as follows. Tetrapolymerization of the monopyrrole PBG into the hydroxymethylbilane pre-uroporphyrinogen in several discrete steps. The polypeptide is Probable porphobilinogen deaminase (hemC) (Chlamydia trachomatis serovar D (strain ATCC VR-885 / DSM 19411 / UW-3/Cx)).